The chain runs to 327 residues: Phenylalanine--tRNA ligase alpha subunit (327 aa).

Glutamate 252 contacts Mg(2+).

This sequence belongs to the class-II aminoacyl-tRNA synthetase family. Phe-tRNA synthetase alpha subunit type 1 subfamily. In terms of assembly, tetramer of two alpha and two beta subunits. Mg(2+) is required as a cofactor.

It localises to the cytoplasm. The enzyme catalyses tRNA(Phe) + L-phenylalanine + ATP = L-phenylalanyl-tRNA(Phe) + AMP + diphosphate + H(+). This is Phenylalanine--tRNA ligase alpha subunit from Salmonella newport (strain SL254).